The primary structure comprises 99 residues: Nucleoid-associated protein SEQ_0368 (99 aa).

This sequence belongs to the YbaB/EbfC family. As to quaternary structure, homodimer.

Its subcellular location is the cytoplasm. The protein localises to the nucleoid. Its function is as follows. Binds to DNA and alters its conformation. May be involved in regulation of gene expression, nucleoid organization and DNA protection. This Streptococcus equi subsp. equi (strain 4047) protein is Nucleoid-associated protein SEQ_0368.